The sequence spans 221 residues: Ependymin-2 (221 aa).

Positions 1–21 (MQDFAFAALSIWLCLGATALA) are cleaved as a signal peptide. Asn-33, Asn-73, and Asn-97 each carry an N-linked (GlcNAc...) asparagine glycan.

This sequence belongs to the ependymin family. Post-translationally, binds calcium through the terminal sialic acids. EPDs are synthesized in the meninx and secreted in the cerebrospinal fluid.

It localises to the secreted. Its function is as follows. May play a role in neural plasticity. May be involved during axon regeneration. This is Ependymin-2 (epd2) from Oncorhynchus mykiss (Rainbow trout).